The sequence spans 492 residues: Catalase isozyme 2 (492 aa).

Residues His65 and Asn138 contribute to the active site. Residue Tyr347 coordinates heme.

The protein belongs to the catalase family. As to quaternary structure, homotetramer. It depends on heme as a cofactor. High levels in green cotyledons, mature leaf, stem and green hypocotyl.

It localises to the peroxisome. The catalysed reaction is 2 H2O2 = O2 + 2 H2O. In terms of biological role, occurs in almost all aerobically respiring organisms and serves to protect cells from the toxic effects of hydrogen peroxide. The polypeptide is Catalase isozyme 2 (CAT2) (Cucurbita pepo (Vegetable marrow)).